The chain runs to 810 residues: Zinc finger transcription factor YRR1 (810 aa).

Residues 1 to 47 (MKRRSDALLGSFQATNVTPPSDNSNSTAGGANGSNSGTPTSTSGKKR) form a disordered region. Residues 12-22 (FQATNVTPPSD) show a composition bias toward polar residues. Positions 23-43 (NSNSTAGGANGSNSGTPTSTS) are enriched in low complexity. Residues 54-82 (CGFCRRRKLRCDQQKPMCSTCISRNLTTC) constitute a DNA-binding region (zn(2)-C6 fungal-type). Positions 722–742 (ELDPQSDNPSSEAKIVSDRQR) are disordered.

The protein localises to the cytoplasm. It localises to the nucleus. Functionally, transcription factor involved in the regulation of multidrug resistance genes. Acts in concert with YRR1. In Saccharomyces cerevisiae (strain ATCC 204508 / S288c) (Baker's yeast), this protein is Zinc finger transcription factor YRR1 (YRR1).